A 269-amino-acid chain; its full sequence is WIMGHMVNDLKLADEFLNDGANSLELDVEFSSSGTAQRTHHGIPCDCFRYCTNSEKFSTYLDYIRQLTTPGNSKFRSRLILLVMDLKLNPLSNRAAYYAGAGVALNLLNHYWQRGESEARAYIVLSLSTIGRADFISGFKNTMEKEGFADKYYDKIGWDFSGNENLQLIRNIFKIYGIREHIWQGDGITNCLPRGDSRLKEALNLRYSPSYVYADKVYTWSIDKESSIENALRLGVDGVMTNHPERLIEVLGKGKYSDKFRLATYDDNP.

Residue histidine 5 is part of the active site. Glutamate 25 and aspartate 27 together coordinate Mg(2+). Histidine 41 acts as the Nucleophile in catalysis. Intrachain disulfides connect cysteine 45-cysteine 51 and cysteine 47-cysteine 191. Aspartate 85 lines the Mg(2+) pocket.

Belongs to the arthropod phospholipase D family. Class II subfamily. Requires Mg(2+) as cofactor. As to expression, expressed by the venom gland.

It is found in the secreted. It carries out the reaction an N-(acyl)-sphingosylphosphocholine = an N-(acyl)-sphingosyl-1,3-cyclic phosphate + choline. The enzyme catalyses an N-(acyl)-sphingosylphosphoethanolamine = an N-(acyl)-sphingosyl-1,3-cyclic phosphate + ethanolamine. The catalysed reaction is a 1-acyl-sn-glycero-3-phosphocholine = a 1-acyl-sn-glycero-2,3-cyclic phosphate + choline. It catalyses the reaction a 1-acyl-sn-glycero-3-phosphoethanolamine = a 1-acyl-sn-glycero-2,3-cyclic phosphate + ethanolamine. Dermonecrotic toxins cleave the phosphodiester linkage between the phosphate and headgroup of certain phospholipids (sphingolipid and lysolipid substrates), forming an alcohol (often choline) and a cyclic phosphate. This toxin acts on sphingomyelin (SM). It may also act on ceramide phosphoethanolamine (CPE), lysophosphatidylcholine (LPC) and lysophosphatidylethanolamine (LPE), but not on lysophosphatidylserine (LPS), and lysophosphatidylglycerol (LPG). It acts by transphosphatidylation, releasing exclusively cyclic phosphate products as second products. Induces dermonecrosis, hemolysis, increased vascular permeability, edema, inflammatory response, and platelet aggregation. The protein is Dermonecrotic toxin SpeSicTox-betaIB3 of Sicarius peruensis (Six-eyed sand spider).